The following is a 336-amino-acid chain: Iron-uptake system permease protein FeuC (336 aa).

A run of 9 helical transmembrane segments spans residues 7–27 (LFIA…SFSV), 57–77 (VVMA…IQAI), 85–105 (PGIL…MLLF), 120–140 (MPLF…IFAW), 150–170 (IILV…FLSL), 191–211 (ANWT…PILI), 246–266 (VAII…GLIA), 280–300 (YILP…DFAG), and 308–328 (EVPA…YLLF).

The protein belongs to the binding-protein-dependent transport system permease family. FecCD subfamily. In terms of assembly, the complex is composed of one ATP-binding protein (YusV), two transmembrane proteins (FeuB and FeuC) and a solute-binding protein (FeuA).

The protein localises to the cell membrane. In terms of biological role, involved in the uptake of iron. Probably responsible for the translocation of the substrate across the membrane. Part of the ABC transporter complex FeuABC/YusV involved in import of the catecholate siderophores bacillibactin and enterobactin. This Bacillus subtilis (strain 168) protein is Iron-uptake system permease protein FeuC (feuC).